We begin with the raw amino-acid sequence, 974 residues long: GISVPGPMGPSGPRGLPGPPGSPGPQGFQGPPGEPGEPGASGPMGPRGPPGPPGKNGDDGEAGKPGRPGERRGLPGTAGLPGMKGHRGFSGLDGAKGDAGPAGPKGEPGSPGENGAPGQMGPRGLPGERGRPGASGPAGARGNDGATGAAGPPGPTGPAGPPGFPGAVGAKGEAGPQGARGSEGPQGVRGEPGPPGPAGAAGPAGNPGADGQPGAKGANGAPGIAGAPGFPGRGPSGPQGPSGPPGPKGNSGEPGAPGSKGDTGAKGEPGPTGIQGPPGPAGEEGKRGARGEPGPTGLPGPPGERGGPGSRGFPGADGVAGPKERGSPGPAGPKGSPGEAGRPGEAGLPGAKGLTGSPGSPGPDGKTGPPGPAGQDGRPGPPGPPGARGQAGVMGFPGPKGAAGEPGKAGERGVPGPPGAVGPAGKDGEAGAQGPPGPAGPAGERGEQGPAGSPGFQGLPGEQGVPGDLGAPGPSGARGERGFPGERGVQGPPGPAGPRGSNGAPGNDGAKGDAGAPGAPGGLQGMPGERGAAGLPGPKGDRGDAGPKGADGAPGKDGVRGLTGPIGPPGPAGAPGDKGESGPSGPAGPTGARGAPGDRGEPGPPGPAGFAGPPGADGQPGAKGEPGDAGAKGDAGPPGPAGPTGPPGPIGNVGAPGPKGARGSAGPPGATGFPGAAGRVGPPGPSGNAGPPGPPGPVGKEGGKGPRGETGPAGRPGEVGPPGPPGPGEKGSPGADGPAGAPGTPGPQGISGQRGVVGLPGQRGERGFPGLPGPSGEPGKQGPSGSSGERGPPGPVGPPGLAGPPGESGREGSPGAEGSPGRDGSPGPKGPPGAPGAPGAPGPVGPAGKSGDRGETGPAGPAGPAGPAGARGPAGPQGPRGDKGETGEQGDRRGFSGLQGPAGPPGSPGEQGPSGASGPAGPRGPPGSAGSPGKDGLNGLPGPIGPPGPRGRTGDAGPVGPPGPPGPPGPPGPP.

The segment covering Gly1–Arg14 has biased composition (low complexity). A disordered region spans residues Gly1–Pro974. 4-hydroxyproline occurs at positions 17, 20, 23, 32, 35, 38, 53, 68, 75, and 81. A compositionally biased stretch (low complexity) spans Pro25–Met44. The segment covering Asn56–Gly73 has biased composition (basic and acidic residues). Lys84 is subject to 5-hydroxylysine; alternate. Lys84 carries O-linked (Gal...) hydroxylysine; alternate glycosylation. Phosphoserine is present on Ser90. A compositionally biased stretch (low complexity) spans Asp98–Asn114. 4-hydroxyproline occurs at positions 108, 111, 117, 126, 132, 153, 162, 165, 192, 195, 207, 213, 222, 228, 231, and 245. Low complexity predominate over residues Pro132–Ala150. The span at Pro152–Phe164 shows a compositional bias: pro residues. Residues Ala198–Pro228 show a composition bias toward low complexity. The residue at position 248 (Lys248) is a 5-hydroxylysine. A 4-hydroxyproline mark is found at Pro254, Pro257, Pro269, Pro278, Pro293, Pro299, Pro308, and Pro314. Positions Gly303–Gly312 are enriched in gly residues. Lys323 is modified (5-hydroxylysine). 4-hydroxyproline is present on residues Pro328, Pro337, Pro343, Pro349, Pro358, Pro361, Pro370, Pro379, Pro385, Pro397, Pro406, Pro415, Pro418, Pro436, Pro454, Pro460, Pro466, Pro472, Pro484, Pro493, Pro505, Pro520, Pro527, and Pro536. The span at Lys352–Arg378 shows a compositional bias: low complexity. A compositionally biased stretch (low complexity) spans Ala387 to Pro406. A compositionally biased stretch (low complexity) spans Ala504–Pro517. 5-hydroxylysine is present on Lys548. Pro554, Pro569, and Pro575 each carry 4-hydroxyproline. Residues Ser581–Ala595 show a composition bias toward low complexity. Ser584 is modified (phosphoserine). Pro596, Pro602, Pro605, Pro614, Pro620, Pro638, Pro647, and Pro656 each carry 4-hydroxyproline. Over residues Ala608–Ala635 the composition is skewed to low complexity. The span at Pro637–Pro649 shows a compositional bias: pro residues. Lys659 bears the 5-hydroxylysine mark. The span at Ser664–Val680 shows a compositional bias: low complexity. Pro668 and Pro674 each carry 4-hydroxyproline. 3-hydroxyproline is present on Pro682. Residues Pro683, Pro692, Pro695, Pro716, Pro725, Pro733, Pro742, Pro760, Pro769, Pro772, Pro778, Pro793, Pro799, Pro805, Pro814, and Pro820 each carry the 4-hydroxyproline modification. The segment covering Glu709–Glu718 has biased composition (low complexity). Residues Lys730 to Pro742 are compositionally biased toward low complexity. A compositionally biased stretch (pro residues) spans Pro792–Ala802. Residues Pro804–Pro826 are compositionally biased toward low complexity. Over residues Pro828–Val844 the composition is skewed to pro residues. Lys829 carries the post-translational modification 5-hydroxylysine. A 4-hydroxyproline mark is found at Pro832, Pro835, and Pro838. Over residues Ala865–Pro879 the composition is skewed to low complexity. Positions Arg880 to Gly894 are enriched in basic and acidic residues. Position 883 is a 5-hydroxylysine (Lys883). Pro905, Pro908, Pro926, and Pro941 each carry 4-hydroxyproline. The segment covering Pro908 to Pro941 has biased composition (low complexity). At Pro946 the chain carries 3-hydroxyproline. Pro947 bears the 4-hydroxyproline mark. Pro residues predominate over residues Val959–Pro974. Pro961 is subject to 3-hydroxyproline. At Pro962 the chain carries 4-hydroxyproline. 3-hydroxyproline is present on Pro964. 4-hydroxyproline is present on Pro965. 3-hydroxyproline is present on Pro967. 4-hydroxyproline is present on residues Pro968, Pro971, and Pro974.

This sequence belongs to the fibrillar collagen family. In terms of assembly, trimers of one alpha 2(I) and two alpha 1(I) chains. Contains mostly 4-hydroxyproline. Proline residues at the third position of the tripeptide repeating unit (G-X-Y) are hydroxylated in some or all of the chains. Post-translationally, contains 3-hydroxyproline at a few sites. This modification occurs on the first proline residue in the sequence motif Gly-Pro-Hyp, where Hyp is 4-hydroxyproline. In terms of processing, lysine residues at the third position of the tripeptide repeating unit (G-X-Y) are 5-hydroxylated in some or all of the chains. O-glycosylated on hydroxylated lysine residues. The O-linked glycan consists of a Glc-Gal disaccharide. As to expression, expressed in bones.

The protein localises to the secreted. It is found in the extracellular space. It localises to the extracellular matrix. Functionally, type I collagen is a member of group I collagen (fibrillar forming collagen). This Scelidodon sp. (strain SLP-2019) (South American ground sloth) protein is Collagen alpha-1(I) chain.